The sequence spans 170 residues: Capsid protein (170 aa).

Positions 1–19 (MAQLRWGRKGVRSQRRKYS) are enriched in basic residues. The tract at residues 1–25 (MAQLRWGRKGVRSQRRKYSRPVAYK) is disordered.

This sequence belongs to the nanoviridae capsid protein family.

Its subcellular location is the virion. The polypeptide is Capsid protein (DNA-S) (Subterranean clover stunt virus (strain J) (SCSV)).